The sequence spans 196 residues: Large ribosomal subunit protein mL66 (196 aa).

Residues 1-34 (MAALRRLVSGCGRQLQAFLAGPAATGWLWLPARG) constitute a mitochondrion transit peptide.

It belongs to the bacterial ribosomal protein bS18 family. Mitochondrion-specific ribosomal protein mL66 subfamily. In terms of assembly, component of the mitochondrial ribosome small subunit (28S) which comprises a 12S rRNA and about 30 distinct proteins.

It localises to the mitochondrion. The protein is Large ribosomal subunit protein mL66 (Mrps18a) of Mus musculus (Mouse).